The sequence spans 338 residues: Pseudouridylate synthase TRUB1 (338 aa).

The residue at position 2 (Ala2) is an N-acetylalanine. Asp109 serves as the catalytic Nucleophile.

The protein belongs to the pseudouridine synthase TruB family.

Its subcellular location is the nucleus. It is found in the cytoplasm. It localises to the cytosol. The catalysed reaction is a uridine in mRNA = a pseudouridine in mRNA. The enzyme catalyses a uridine in tRNA = a pseudouridine in tRNA. It carries out the reaction uridine(55) in tRNA = pseudouridine(55) in tRNA. Pseudouridine synthase that catalyzes pseudouridylation of mRNAs and tRNAs. Mediates pseudouridylation of mRNAs with the consensus sequence 5'-GUUCNANNC-3', harboring a stem-loop structure. Constitutes the major pseudouridine synthase acting on mRNAs. Also catalyzes pseudouridylation of some tRNAs, including synthesis of pseudouridine(55) from uracil-55, in the psi GC loop of a subset of tRNAs. Promotes the processing of pri-let-7 microRNAs (pri-miRNAs) independently of its RNA pseudouridylate synthase activity. Acts by binding to the stem-loop structure on pri-let-7, preventing LIN28-binding (LIN28A and/or LIN28B), thereby enhancing the interaction between pri-let-7 and the microprocessor DGCR8, which mediates miRNA maturation. This is Pseudouridylate synthase TRUB1 from Mus musculus (Mouse).